The sequence spans 477 residues: Glutamate--tRNA ligase (477 aa).

Positions Pro8–Thr18 match the 'HIGH' region motif. The 'KMSKS' region signature appears at Lys247–Arg251. ATP is bound at residue Lys250.

Belongs to the class-I aminoacyl-tRNA synthetase family. Glutamate--tRNA ligase type 1 subfamily. Monomer.

The protein localises to the cytoplasm. The catalysed reaction is tRNA(Glu) + L-glutamate + ATP = L-glutamyl-tRNA(Glu) + AMP + diphosphate. In terms of biological role, catalyzes the attachment of glutamate to tRNA(Glu) in a two-step reaction: glutamate is first activated by ATP to form Glu-AMP and then transferred to the acceptor end of tRNA(Glu). The protein is Glutamate--tRNA ligase of Synechococcus sp. (strain CC9605).